The primary structure comprises 249 residues: Exosome complex component Rrp41 (249 aa).

The protein belongs to the RNase PH family. Rrp41 subfamily. Component of the archaeal exosome complex. Forms a hexameric ring-like arrangement composed of 3 Rrp41-Rrp42 heterodimers. The hexameric ring associates with a trimer of Rrp4 and/or Csl4 subunits.

It localises to the cytoplasm. Functionally, catalytic component of the exosome, which is a complex involved in RNA degradation. Has 3'-&gt;5' exoribonuclease activity. Can also synthesize heteromeric RNA-tails. The chain is Exosome complex component Rrp41 from Pyrococcus abyssi (strain GE5 / Orsay).